Here is a 354-residue protein sequence, read N- to C-terminus: Mitogen-activated protein kinase kinase 1 (354 aa).

Positions 68 to 328 (LEVIKVIGKG…AKELLEHKFV (261 aa)) constitute a Protein kinase domain. Residues 74–82 (IGKGSSGNV) and Lys-97 each bind ATP. The active-site Proton acceptor is the Asp-190. Residue Thr-218 is modified to Phosphothreonine. Ser-224 is modified (phosphoserine). Thr-228 bears the Phosphothreonine mark.

This sequence belongs to the protein kinase superfamily. STE Ser/Thr protein kinase family. MAP kinase kinase subfamily. In terms of assembly, interacts with MEKK1 and MPK4. May form a ternary complex composed of MEKK1 and MKK1/MKK2 and MPK4. Interacts with P.syringae type III effector HopF2. Interacts with MPK11. Phosphorylation at Thr-218 and Ser-224 by MAP kinase kinase kinases positively regulates kinase activity. In terms of tissue distribution, expressed in roots, stem, flowers and siliques.

The catalysed reaction is L-seryl-[protein] + ATP = O-phospho-L-seryl-[protein] + ADP + H(+). It catalyses the reaction L-threonyl-[protein] + ATP = O-phospho-L-threonyl-[protein] + ADP + H(+). It carries out the reaction L-tyrosyl-[protein] + ATP = O-phospho-L-tyrosyl-[protein] + ADP + H(+). Its activity is regulated as follows. Activated through serine and threonine phosphorylation in response to wounding, cold, drought, salt stresses, abscisic acid (ABA), hydrogen peroxide, bacterial flagellin and laminarin beta-glucan. In terms of biological role, MEKK1, MKK1/MKK2 and MPK4/MPK6 function in a signaling pathway that modulates the expression of genes responding to biotic and abiotic stresses and also plays an important role in pathogen defense by negatively regulating innate immunity. Activates by phosphorylation the downstream MPK4. Acts redundantly with MKK2. MKK1-MPK6 module mediates abscisic acid (ABA)-dependent CAT1 expression with H(2)O(2) production and response to drought and salt stress. MKK1-MPK6 module is also involved in sugar signaling during the process of seed germination. The sequence is that of Mitogen-activated protein kinase kinase 1 (MKK1) from Arabidopsis thaliana (Mouse-ear cress).